The primary structure comprises 441 residues: Glutamate--tRNA ligase 2 (441 aa).

Residues 6-16 carry the 'HIGH' region motif; it reads PSPTGDMHIGN. Residues 231 to 235 carry the 'KMSKS' region motif; that stretch reads KMSKR. ATP is bound at residue lysine 234.

It belongs to the class-I aminoacyl-tRNA synthetase family. Glutamate--tRNA ligase type 1 subfamily. As to quaternary structure, monomer.

The protein resides in the cytoplasm. It catalyses the reaction tRNA(Glu) + L-glutamate + ATP = L-glutamyl-tRNA(Glu) + AMP + diphosphate. In terms of biological role, catalyzes the attachment of glutamate to tRNA(Glu) in a two-step reaction: glutamate is first activated by ATP to form Glu-AMP and then transferred to the acceptor end of tRNA(Glu). The protein is Glutamate--tRNA ligase 2 of Helicobacter hepaticus (strain ATCC 51449 / 3B1).